Consider the following 145-residue polypeptide: Protein SprT-like (145 aa).

The 137-residue stretch at 5 to 141 (DYVREVSLAD…CGRCHGRLIK (137 aa)) folds into the SprT-like domain. His-64 serves as a coordination point for Zn(2+). Glu-65 is an active-site residue. His-68 is a binding site for Zn(2+).

This sequence belongs to the SprT family. It depends on Zn(2+) as a cofactor.

Its subcellular location is the cytoplasm. The chain is Protein SprT-like from Streptococcus equi subsp. zooepidemicus (strain H70).